The chain runs to 179 residues: Large ribosomal subunit protein uL6 (179 aa).

It belongs to the universal ribosomal protein uL6 family. As to quaternary structure, part of the 50S ribosomal subunit.

In terms of biological role, this protein binds to the 23S rRNA, and is important in its secondary structure. It is located near the subunit interface in the base of the L7/L12 stalk, and near the tRNA binding site of the peptidyltransferase center. The chain is Large ribosomal subunit protein uL6 from Fructilactobacillus sanfranciscensis (Lactobacillus sanfranciscensis).